Here is a 502-residue protein sequence, read N- to C-terminus: 4,4'-diapophytoene desaturase (4,4'-diaponeurosporene-forming) (502 aa).

Residue 5–17 participates in FAD binding; that stretch reads VIGAGVTGLAAAA.

Belongs to the carotenoid/retinoid oxidoreductase family. CrtN subfamily.

The catalysed reaction is 15-cis-4,4'-diapophytoene + 3 FAD + 3 H(+) = all-trans-4,4'-diaponeurosporene + 3 FADH2. It participates in carotenoid biosynthesis; staphyloxanthin biosynthesis; staphyloxanthin from farnesyl diphosphate: step 2/5. In terms of biological role, involved in the biosynthesis of the yellow-orange carotenoid staphyloxanthin, which plays a role in the virulence via its protective function against oxidative stress. Catalyzes three successive dehydrogenation reactions that lead to the introduction of three double bonds into 4,4'-diapophytoene (dehydrosqualene), with 4,4'-diapophytofluene and 4,4'-diapo-zeta-carotene as intermediates, and 4,4'-diaponeurosporene (the major deep-yellow pigment in staphylococci strains) as the end product. This Staphylococcus aureus (strain MW2) protein is 4,4'-diapophytoene desaturase (4,4'-diaponeurosporene-forming).